The following is a 262-amino-acid chain: MKRHEMVVAKHSALCSRFAQDLWLEQNIKDSFQKVTLSRYGKYGHKNLQLRKGCKSVDECKGHQGGFNGLNQCLKITTSKIFQCNKYVKVMHKFSNSNRHKIRHTENKHFRCKECDKSLCMLSRLTQHKKIHTRENFYKCEECGKTFNWSTNLSKPKKIHTGEKPYKCEVCGKAFHQSSILTKHKIIRTGEKPYKCAHCGKAFKQSSHLTRHKIIHTEEKPYKCEQCGKVFKQSPTLTKHQIIYTGEEPYKCEECGKAFNLS.

Residues 110 to 132 form a C2H2-type 1 zinc finger; it reads FRCKECDKSLCMLSRLTQHKKIH. Residues 138 to 160 form a C2H2-type 2; degenerate zinc finger; that stretch reads YKCEECGKTFNWSTNLSKPKKIH. The segment at 166-188 adopts a C2H2-type 3; degenerate zinc-finger fold; it reads YKCEVCGKAFHQSSILTKHKIIR. Residues 194–216 form a C2H2-type 4 zinc finger; it reads YKCAHCGKAFKQSSHLTRHKIIH. A C2H2-type 5; degenerate zinc finger spans residues 222 to 244; that stretch reads YKCEQCGKVFKQSPTLTKHQIIY. The C2H2-type 6; degenerate zinc-finger motif lies at 250 to 262; the sequence is YKCEECGKAFNLS.

It belongs to the krueppel C2H2-type zinc-finger protein family.

It localises to the nucleus. May be involved in transcriptional regulation as a repressor. This is Zinc finger protein 138 (ZNF138) from Homo sapiens (Human).